Here is a 208-residue protein sequence, read N- to C-terminus: Large ribosomal subunit protein uL4 (208 aa).

The tract at residues 49–78 (HKAKTRAEVRGGGKKPFRQKGTGNARQGST) is disordered. Polar residues predominate over residues 69–78 (GTGNARQGST).

It belongs to the universal ribosomal protein uL4 family. Part of the 50S ribosomal subunit.

In terms of biological role, one of the primary rRNA binding proteins, this protein initially binds near the 5'-end of the 23S rRNA. It is important during the early stages of 50S assembly. It makes multiple contacts with different domains of the 23S rRNA in the assembled 50S subunit and ribosome. Its function is as follows. Forms part of the polypeptide exit tunnel. In Chlorobaculum tepidum (strain ATCC 49652 / DSM 12025 / NBRC 103806 / TLS) (Chlorobium tepidum), this protein is Large ribosomal subunit protein uL4.